The chain runs to 97 residues: Acylphosphatase-2 (97 aa).

The residue at position 2 (Ala2) is an N-acetylalanine. Residues 7 to 97 enclose the Acylphosphatase-like domain; the sequence is SVDYEVFGTV…LEYSNFSIRY (91 aa). Active-site residues include Arg22 and Asn40. Ser91 is modified (phosphoserine).

It belongs to the acylphosphatase family.

It carries out the reaction an acyl phosphate + H2O = a carboxylate + phosphate + H(+). In terms of biological role, its physiological role is not yet clear. This Rattus norvegicus (Rat) protein is Acylphosphatase-2 (Acyp2).